We begin with the raw amino-acid sequence, 922 residues long: Isoleucine--tRNA ligase (922 aa).

The short motif at 58–68 (PYANGDIHIGH) is the 'HIGH' region element. Glutamate 552 is a binding site for L-isoleucyl-5'-AMP. Positions 593 to 597 (KMSKS) match the 'KMSKS' region motif. An ATP-binding site is contributed by lysine 596. Residues cysteine 885, cysteine 888, cysteine 905, and cysteine 908 each contribute to the Zn(2+) site.

This sequence belongs to the class-I aminoacyl-tRNA synthetase family. IleS type 1 subfamily. As to quaternary structure, monomer. Zn(2+) serves as cofactor.

The protein resides in the cytoplasm. The enzyme catalyses tRNA(Ile) + L-isoleucine + ATP = L-isoleucyl-tRNA(Ile) + AMP + diphosphate. In terms of biological role, catalyzes the attachment of isoleucine to tRNA(Ile). As IleRS can inadvertently accommodate and process structurally similar amino acids such as valine, to avoid such errors it has two additional distinct tRNA(Ile)-dependent editing activities. One activity is designated as 'pretransfer' editing and involves the hydrolysis of activated Val-AMP. The other activity is designated 'posttransfer' editing and involves deacylation of mischarged Val-tRNA(Ile). The protein is Isoleucine--tRNA ligase of Ruthia magnifica subsp. Calyptogena magnifica.